Reading from the N-terminus, the 395-residue chain is ATP phosphoribosyltransferase regulatory subunit (395 aa).

This sequence belongs to the class-II aminoacyl-tRNA synthetase family. HisZ subfamily. In terms of assembly, heteromultimer composed of HisG and HisZ subunits.

It is found in the cytoplasm. The protein operates within amino-acid biosynthesis; L-histidine biosynthesis; L-histidine from 5-phospho-alpha-D-ribose 1-diphosphate: step 1/9. Functionally, required for the first step of histidine biosynthesis. May allow the feedback regulation of ATP phosphoribosyltransferase activity by histidine. This Pseudomonas savastanoi pv. phaseolicola (strain 1448A / Race 6) (Pseudomonas syringae pv. phaseolicola (strain 1448A / Race 6)) protein is ATP phosphoribosyltransferase regulatory subunit.